The chain runs to 302 residues: Coiled-coil domain-containing protein 2 (302 aa).

The first 22 residues, 1-22, serve as a signal peptide directing secretion; that stretch reads MKNFGLLVVCLSLATLVIPSDG. Residues 198 to 234 are a coiled coil; the sequence is FADAMEKKAEALENAAEAAAEYISDQSEEVDDLSEEV. A disordered region spans residues 221 to 257; the sequence is SDQSEEVDDLSEEVLDDDSDENDSTSSESEVEDSDVD. Positions 223–257 are enriched in acidic residues; the sequence is QSEEVDDLSEEVLDDDSDENDSTSSESEVEDSDVD. N-linked (GlcNAc...) asparagine glycosylation occurs at N242.

As to expression, component of the acid-insoluble organic matrix of calcified layers of the shell (at protein level).

It localises to the secreted. In Lottia gigantea (Giant owl limpet), this protein is Coiled-coil domain-containing protein 2.